A 187-amino-acid chain; its full sequence is Capsid protein VP10 (187 aa).

An intrachain disulfide couples C45 to C51.

The protein resides in the virion. In terms of biological role, VP10 self-assembles, together with capsid protein VP4, to form an icosahedral caspid of 87 nm in diameter, with a T=43 symmetry and composed of 420 hexamers and 12 pentamers. VP4 proteins arrange into hexons, while VP10 proteins form the pentameric densities located at the 5-fold axes in the virion. The stoichiometry of VP4:VP10 is 42:1. This chain is Capsid protein VP10, found in Sulfolobus polyhedral virus 1 (SPV1).